The following is a 901-amino-acid chain: Schlafen family member 11 (901 aa).

Mg(2+)-binding residues include Glu209 and Glu214. Lys216 is an active-site residue. Zn(2+) contacts are provided by His285, Cys287, Cys321, and Cys322. 599–606 provides a ligand contact to ATP; sequence GLPGSGKT.

Belongs to the Schlafen family. Subgroup III subfamily. In terms of assembly, homodimer. Interacts with MCM3. Interacts with DHX9. Interacts with RPA1. Mg(2+) serves as cofactor. As to expression, exhibits a wider expression range in ovarian and colon adenocarcinoma than in their corresponding healthy tissues.

Its subcellular location is the nucleus. The protein resides in the chromosome. Functionally, inhibitor of DNA replication that promotes cell death in response to DNA damage. Acts as a guardian of the genome by killing cells with defective replication. Persistently blocks stressed replication forks by opening chromatin across replication initiation sites at stressed replication forks, possibly leading to unwind DNA ahead of the MCM helicase and block fork progression, ultimately leading to cell death. Upon DNA damage, inhibits translation of ATR or ATM based on distinct codon usage without disrupting early DNA damage response signaling. Antiviral restriction factor with manganese-dependent type II tRNA endoribonuclease. A single tRNA molecule is bound and cleaved by the SLFN11 dimer. Specifically abrogates the production of retroviruses such as human immunodeficiency virus 1 (HIV-1) by acting as a specific inhibitor of the synthesis of retroviruses encoded proteins in a codon-usage-dependent manner. Impairs the replication of human cytomegalovirus (HCMV) and some Flaviviruses. Exploits the unique viral codon bias towards A/T nucleotides. Also acts as an interferon (IFN)-induced antiviral protein which acts as an inhibitor of retrovirus protein synthesis. The polypeptide is Schlafen family member 11 (Homo sapiens (Human)).